Here is a 465-residue protein sequence, read N- to C-terminus: ATP synthase subunit beta (465 aa).

153–160 (GGAGVGKT) serves as a coordination point for ATP.

It belongs to the ATPase alpha/beta chains family. F-type ATPases have 2 components, CF(1) - the catalytic core - and CF(0) - the membrane proton channel. CF(1) has five subunits: alpha(3), beta(3), gamma(1), delta(1), epsilon(1). CF(0) has three main subunits: a(1), b(2) and c(9-12). The alpha and beta chains form an alternating ring which encloses part of the gamma chain. CF(1) is attached to CF(0) by a central stalk formed by the gamma and epsilon chains, while a peripheral stalk is formed by the delta and b chains.

Its subcellular location is the cell membrane. It carries out the reaction ATP + H2O + 4 H(+)(in) = ADP + phosphate + 5 H(+)(out). Functionally, produces ATP from ADP in the presence of a proton gradient across the membrane. The catalytic sites are hosted primarily by the beta subunits. The protein is ATP synthase subunit beta of Clostridium perfringens (strain SM101 / Type A).